The sequence spans 458 residues: MSTEDAAITVIGAGLAGSEAALAAARLGVRVRLHEMRPHKMTPAHRTGNFAELVCSTSLGGEGEMQAKGLLQAELRSVGGAIVGAADSSRVPAGNALAVDRDEFSARVTQAVRAHPLIEVVEGEVEAVPEGIGVIATGPLTSDALAADLARRTGSERLSFYDAAAPVIAFESINMDVAWRAGRYDQSADYINCPFTKEEYLRFFEALEQARRHTPHDWEQLEFFEGCMPIEELARRGVDTPRFGPMSPKGLDDPRTGRWPYAVAQLRQEDRAGRMWSLVGFQTGLKWGDQKVVVNLIPGLENAEIVRYGVMHRNTYLNAPEVLDATLQLRADPQKFVAGVLAGTEGYLESAATGWLAGTNAARLARGLTPLTPPPESMLGGLVRYLASANPKGFQPMNVNWALVPELPVPEGRRKLGKREKRPVLFQRGLNAFVAWAREEAGLPVTPPARPTAALATE.

An FAD-binding site is contributed by 12–17; it reads GAGLAG.

Belongs to the MnmG family. TrmFO subfamily. It depends on FAD as a cofactor.

The protein resides in the cytoplasm. The enzyme catalyses uridine(54) in tRNA + (6R)-5,10-methylene-5,6,7,8-tetrahydrofolate + NADH + H(+) = 5-methyluridine(54) in tRNA + (6S)-5,6,7,8-tetrahydrofolate + NAD(+). It catalyses the reaction uridine(54) in tRNA + (6R)-5,10-methylene-5,6,7,8-tetrahydrofolate + NADPH + H(+) = 5-methyluridine(54) in tRNA + (6S)-5,6,7,8-tetrahydrofolate + NADP(+). Functionally, catalyzes the folate-dependent formation of 5-methyl-uridine at position 54 (M-5-U54) in all tRNAs. This Deinococcus geothermalis (strain DSM 11300 / CIP 105573 / AG-3a) protein is Methylenetetrahydrofolate--tRNA-(uracil-5-)-methyltransferase TrmFO.